The following is a 529-amino-acid chain: Probable serine carboxypeptidase ARB_06414 (529 aa).

A signal peptide spans 1 to 19 (MRGLSYFVLALSAIDAAAA). Residues 171–191 (PTDDNPSRPVGTGFSQGKPSV) form a disordered region. The active site involves S225. N-linked (GlcNAc...) asparagine glycans are attached at residues N284 and N377. Residue D434 is part of the active site. N-linked (GlcNAc...) asparagine glycosylation is found at N440 and N448. The active site involves H503.

The protein belongs to the peptidase S10 family.

It is found in the secreted. Its function is as follows. Removes acidic, neutral and basic amino acids as well as proline from the C-terminal position. The polypeptide is Probable serine carboxypeptidase ARB_06414 (Arthroderma benhamiae (strain ATCC MYA-4681 / CBS 112371) (Trichophyton mentagrophytes)).